The sequence spans 340 residues: Ketol-acid reductoisomerase (NADP(+)) (340 aa).

One can recognise a KARI N-terminal Rossmann domain in the interval 3 to 183 (INVYYDKDCD…GGGRTGIIET (181 aa)). NADP(+)-binding positions include 26–29 (FGSQ), Ser54, and 84–87 (DELQ). The active site involves His109. Gly135 contributes to the NADP(+) binding site. Residues 184–329 (TFKDETETDL…KKLRAMMPWI (146 aa)) form the KARI C-terminal knotted domain. Residues Asp192, Glu196, Glu228, and Glu232 each contribute to the Mg(2+) site. Ser253 serves as a coordination point for substrate.

The protein belongs to the ketol-acid reductoisomerase family. The cofactor is Mg(2+).

The catalysed reaction is (2R)-2,3-dihydroxy-3-methylbutanoate + NADP(+) = (2S)-2-acetolactate + NADPH + H(+). It carries out the reaction (2R,3R)-2,3-dihydroxy-3-methylpentanoate + NADP(+) = (S)-2-ethyl-2-hydroxy-3-oxobutanoate + NADPH + H(+). The protein operates within amino-acid biosynthesis; L-isoleucine biosynthesis; L-isoleucine from 2-oxobutanoate: step 2/4. Its pathway is amino-acid biosynthesis; L-valine biosynthesis; L-valine from pyruvate: step 2/4. Involved in the biosynthesis of branched-chain amino acids (BCAA). Catalyzes an alkyl-migration followed by a ketol-acid reduction of (S)-2-acetolactate (S2AL) to yield (R)-2,3-dihydroxy-isovalerate. In the isomerase reaction, S2AL is rearranged via a Mg-dependent methyl migration to produce 3-hydroxy-3-methyl-2-ketobutyrate (HMKB). In the reductase reaction, this 2-ketoacid undergoes a metal-dependent reduction by NADPH to yield (R)-2,3-dihydroxy-isovalerate. This chain is Ketol-acid reductoisomerase (NADP(+)), found in Campylobacter concisus (strain 13826).